The primary structure comprises 408 residues: LL-diaminopimelate aminotransferase (408 aa).

Residues Y15 and G42 each coordinate substrate. Pyridoxal 5'-phosphate is bound by residues Y72, 108-109, Y132, N187, Y218, and 246-248; these read SK and SFS. Substrate is bound by residues K109, Y132, and N187. K249 is modified (N6-(pyridoxal phosphate)lysine). The pyridoxal 5'-phosphate site is built by R257 and N292. The substrate site is built by N292 and R388.

It belongs to the class-I pyridoxal-phosphate-dependent aminotransferase family. LL-diaminopimelate aminotransferase subfamily. In terms of assembly, homodimer. Pyridoxal 5'-phosphate is required as a cofactor.

The catalysed reaction is (2S,6S)-2,6-diaminopimelate + 2-oxoglutarate = (S)-2,3,4,5-tetrahydrodipicolinate + L-glutamate + H2O + H(+). Its pathway is amino-acid biosynthesis; L-lysine biosynthesis via DAP pathway; LL-2,6-diaminopimelate from (S)-tetrahydrodipicolinate (aminotransferase route): step 1/1. Its function is as follows. Involved in the synthesis of meso-diaminopimelate (m-DAP or DL-DAP), required for both lysine and peptidoglycan biosynthesis. Catalyzes the direct conversion of tetrahydrodipicolinate to LL-diaminopimelate. The polypeptide is LL-diaminopimelate aminotransferase (Leptospira interrogans serogroup Icterohaemorrhagiae serovar Lai (strain 56601)).